A 434-amino-acid chain; its full sequence is Double-stranded RNA-binding protein 2 (434 aa).

DRBM domains follow at residues 1 to 70 (MYKN…ALSN) and 87 to 155 (VYKN…SLKQ). The disordered stretch occupies residues 402-434 (EKTASKETERAEFKDSSKGEPETARERLENLKI).

Heterodimer with DRB1 or DRB5. Interacts with DCL1 and DCL5.

Its subcellular location is the cytoplasm. Its function is as follows. Binds double-stranded RNA. May be involved in RNA-mediated silencing. This is Double-stranded RNA-binding protein 2 (DRB2) from Arabidopsis thaliana (Mouse-ear cress).